Consider the following 264-residue polypeptide: Thiazole synthase (264 aa).

The active-site Schiff-base intermediate with DXP is Lys-104. 1-deoxy-D-xylulose 5-phosphate-binding positions include Gly-165, 191-192, and 213-214; these read AG and NT.

It belongs to the ThiG family. As to quaternary structure, homotetramer. Forms heterodimers with either ThiH or ThiS.

The protein resides in the cytoplasm. The catalysed reaction is [ThiS sulfur-carrier protein]-C-terminal-Gly-aminoethanethioate + 2-iminoacetate + 1-deoxy-D-xylulose 5-phosphate = [ThiS sulfur-carrier protein]-C-terminal Gly-Gly + 2-[(2R,5Z)-2-carboxy-4-methylthiazol-5(2H)-ylidene]ethyl phosphate + 2 H2O + H(+). The protein operates within cofactor biosynthesis; thiamine diphosphate biosynthesis. Its function is as follows. Catalyzes the rearrangement of 1-deoxy-D-xylulose 5-phosphate (DXP) to produce the thiazole phosphate moiety of thiamine. Sulfur is provided by the thiocarboxylate moiety of the carrier protein ThiS. In vitro, sulfur can be provided by H(2)S. In Oleidesulfovibrio alaskensis (strain ATCC BAA-1058 / DSM 17464 / G20) (Desulfovibrio alaskensis), this protein is Thiazole synthase.